The chain runs to 414 residues: F-box protein At3g47030 (414 aa).

Residues 1–24 form a disordered region; it reads MSGMLGLSAVMGKRPKQQVTARPR. The F-box domain maps to 28 to 77; the sequence is IEKPEEIPDDLLIDVFSRLSIEDVARCRCLSRFWSSILRRRYFTELFHKM.

This Arabidopsis thaliana (Mouse-ear cress) protein is F-box protein At3g47030.